Here is a 61-residue protein sequence, read N- to C-terminus: MDPNCSCATDGSCSCSGSCKCKECKCTTCKKSCCSCCPVGCAKCSQGCVCKEASEKCSCCA.

Residue methionine 1 is modified to N-acetylmethionine. The tract at residues 1–29 (MDPNCSCATDGSCSCSGSCKCKECKCTTC) is beta. Cysteine 5, cysteine 7, cysteine 13, cysteine 15, cysteine 19, cysteine 21, cysteine 24, cysteine 26, cysteine 29, cysteine 33, cysteine 34, cysteine 36, cysteine 37, cysteine 41, cysteine 44, cysteine 48, cysteine 50, and cysteine 57 together coordinate a divalent metal cation. The tract at residues 30-61 (KKSCCSCCPVGCAKCSQGCVCKEASEKCSCCA) is alpha. Residue serine 58 is modified to Phosphoserine. Cysteine 59 and cysteine 60 together coordinate a divalent metal cation.

It belongs to the metallothionein superfamily. Type 1 family.

Functionally, metallothioneins have a high content of cysteine residues that bind various heavy metals; these proteins are transcriptionally regulated by both heavy metals and glucocorticoids. This Mesocricetus auratus (Golden hamster) protein is Metallothionein-2 (MT2).